The following is a 1479-amino-acid chain: MSQLWVLYETYCQLFSLTNEEKVIVIGNQLEHHVTVSSFSFRNGYIQIEKKSDGSTLAVLQGGRQIGELKPRCSITIDVDGQQMTIAWSGEEQRKYVYYVGQQSEVLVSNDPQADIETTNARFSLRKHRGQWVVIPDDDAPLFLNGVQLSDAVSLRNGDVLLCPYMQFVFIEEDLLAVTSSEEVVSSLTETMPPLSEMKKKYPMYRRTPRMIYELPSDKVSISFPSQEGDGDPRGLWLMVLPPVMMLLVIGAVALIQPRGVFIMISIAMFATTIVTSTAQYMREKKARQMRKEKRRRIYTNYLEQKREELQALSEKQRNVLYYHFPSFEQMKSFVMQVNSRIWERTAESADFLHVRIGTADVPATYEVSVSMGDLANREIDDLLEQAQHIAKVYQTVKHVPLPIDVSHGAIGMVGKRSIVNGEIEQLVGQIAFFHSYHDVRFVAIFSEDDYKHWEWMKWLPHFQLPNSFAKGLIYNEQTRDQLLSSIYEMLRERALDEEKDKKRFSPHFVFIVADRSLIAEHVILEYLEEKNEDIGISVIFASETKESLTENVHTLVQYINEREGEIVIQHRKAAHIPFQLDEHSTEGNESFARMLRSLNHQKGMSNSIPEKVTFLEMMQTRRANELQIVQNWLSCQTSRSLAVPIGLKGRNDVVELNLHEKAHGPHGLVAGTTGSGKSELLQTYILSLAVHFHPHEVAFLIIDYKGGGMAQPFKNMPHLLGTITNIHGSKNFSARALASINSELKKRQRLFDRYEVNHINDYMELYKQGKAEQPLPHLFLIADEFAELKSEEPDFIRELVSAARIGRSLGVHLILATQKPRGVIDEQIWSNARFRISLKMQDVNDSKEILRNGDAAAITVPGRAYLQVGNNEVYELFQSAWSGAPYVEEGVEAEDEIHIVTDLGLVPVSNVATDRKRSRQKPKTEIEMVVEQIIETQKQLNIEKLPSPWLPPLPPRLARPASVTAEANAFPIGLKDEPELQSQSDYFYQWLEDGNIGIFGSAGYGKSTTMMTLLLSFAGAYNPAQLHYYIFDFGNSALLPLRQLPHTADYFRLDDEKKIEKFIKFMKEEMEQRKQRFMEKEVSTIKLYNALSEEKLPIIIVALDNFDVVKEEMPDFETQLIQYARDGQSLGIFFIMTATRVSGIRPPLMNNLKTKIVHYFIDSSEKFSLIGRTPYDVDPIPGRALIKKDNAALTQIYLPADGEDDIEVLENVKREMERLKEVYQHIPKPKPIPMLPPRLSMSVFTNTYVQHRASGFIPVGLDEQTVRPVAINMRTDPHCLIVGQSRKGKTNVVKVILESLLVQEPESIGLLDGIDRGLAGYANRDDITYIEAKERLAQWLNEADAVLQQREREYIQAVNENRATTLAWPPVVFVVDSLLRLQQETDSIMQGRIANMMKQYSHLGFHVFVAGNANEFVKGFDALTAELKQIRQAILVTKKSEQSLFALPFTRNEQEIEPGFGYFVVGGKDQKIQIPKVE.

Topologically, residues 1–235 (MSQLWVLYET…SQEGDGDPRG (235 aa)) are cytoplasmic. The helical transmembrane segment at 236 to 256 (LWLMVLPPVMMLLVIGAVALI) threads the bilayer. The Extracellular portion of the chain corresponds to 257 to 259 (QPR). The chain crosses the membrane as a helical span at residues 260-280 (GVFIMISIAMFATTIVTSTAQ). Over 281–1479 (YMREKKARQM…DQKIQIPKVE (1199 aa)) the chain is Cytoplasmic. Residues 291-321 (RKEKRRRIYTNYLEQKREELQALSEKQRNVL) are a coiled coil. FtsK domains are found at residues 652–848 (NDVV…NDSK) and 984–1168 (QSDY…SEKF). 672–679 (GTTGSGKS) contributes to the ATP binding site. The active site involves Glu-785. ATP contacts are provided by residues 1004–1009 (GYGKST), Asn-1036, Asp-1105, Ile-1197, Asp-1206, 1287–1291 (RKGKT), and Ile-1475. The 178-residue stretch at 1267 to 1444 (VRPVAINMRT…ILVTKKSEQS (178 aa)) folds into the FtsK 3 domain.

In terms of assembly, whole protein oligomerizes in native gels. Part of the ESX / type VII secretion system (T7SS), which is composed of cytosolic and membrane components. The ESX membrane complex is composed of EccB, EccC and EccD.

Its subcellular location is the cell membrane. EsxB binding to the third FtsK domain causes multimerization; a subsequent unknown step relieves the allosteric inhibition of linker 2 on FtsK domain 1, activating the ATPase activity. Part of the ESX specialized secretion system, which exports proteins from the cell including EsxA (ESAT-6) and EsxB (CFP-10). Might be the translocase subunit. Probably only the first FtsK domain can hydrolyze ATP. In Geobacillus thermodenitrificans (strain NG80-2), this protein is ESX secretion system protein EccC.